A 135-amino-acid chain; its full sequence is Poly [ADP-ribose] polymerase 1 (135 aa).

The PARP alpha-helical domain maps to 1–21 (QAKVEMLDNLLDIEVAYSLLK). Residues 30 to 135 (DPIDINYEKL…APVTGYMFGK (106 aa)) enclose the PARP catalytic domain. NAD(+) contacts are provided by residues 104–106 (HGS), Gly-113, and Arg-120. Lys-135 is a catalytic residue.

Belongs to the ARTD/PARP family. In terms of assembly, homodimer; PARP-type zinc-fingers from separate parp1 molecules form a dimer module that specifically recognizes DNA strand breaks. In terms of processing, poly-ADP-ribosylated on serine, glutamate and aspartate residues by autocatalysis. Auto-ADP-ribosylation on serine takes place following interaction with HPF1. Auto poly-ADP-ribosylation on serine residues promotes its dissociation from chromatin.

The protein resides in the chromosome. Its subcellular location is the nucleus. It localises to the nucleolus. The protein localises to the cytoplasm. It is found in the cytosol. The catalysed reaction is NAD(+) + (ADP-D-ribosyl)n-acceptor = nicotinamide + (ADP-D-ribosyl)n+1-acceptor + H(+).. It catalyses the reaction L-seryl-[protein] + NAD(+) = O-(ADP-D-ribosyl)-L-seryl-[protein] + nicotinamide + H(+). The enzyme catalyses L-aspartyl-[protein] + NAD(+) = 4-O-(ADP-D-ribosyl)-L-aspartyl-[protein] + nicotinamide. It carries out the reaction L-glutamyl-[protein] + NAD(+) = 5-O-(ADP-D-ribosyl)-L-glutamyl-[protein] + nicotinamide. The catalysed reaction is L-tyrosyl-[protein] + NAD(+) = O-(ADP-D-ribosyl)-L-tyrosyl-[protein] + nicotinamide + H(+). It catalyses the reaction L-histidyl-[protein] + NAD(+) = N(tele)-(ADP-D-ribosyl)-L-histidyl-[protein] + nicotinamide + H(+). Its activity is regulated as follows. ADP-ribosyltransferase activity is regulated via an allosteric activation mechanism. In absence of activation signal, parp1 is autoinhibited by the PARP alpha-helical domain (also named HD region), which prevents effective NAD(+)-binding. Activity is highly stimulated by signals, such as DNA strand breaks. Binding to damaged DNA unfolds the PARP alpha-helical domain, relieving autoinhibition. Poly-ADP-ribosyltransferase activity is tightly regulated and parp1 is removed from damaged chromatin following initial poly-ADP-ribosylation of chromatin to avoid prolonged residence (trapping) that has cytotoxic consequences. A number of factors or post-translational modifications (auto-poly-ADP-ribosylation) promote parp1 removal from chromatin. Poly-ADP-ribosyltransferase that mediates poly-ADP-ribosylation of proteins and plays a key role in DNA repair. Mediates glutamate, aspartate, serine, histidine or tyrosine ADP-ribosylation of proteins: the ADP-D-ribosyl group of NAD(+) is transferred to the acceptor carboxyl group of target residues and further ADP-ribosyl groups are transferred to the 2'-position of the terminal adenosine moiety, building up a polymer with an average chain length of 20-30 units. Serine ADP-ribosylation of proteins constitutes the primary form of ADP-ribosylation of proteins in response to DNA damage. Specificity for the different amino acids is conferred by interacting factors, such as hpf1 and nmnat1. Following interaction with hpf1, catalyzes serine ADP-ribosylation of target proteins; hpf1 confers serine specificity by completing the parp1 active site. Also catalyzes tyrosine ADP-ribosylation of target proteins following interaction with hpf1. Following interaction with nmnat1, catalyzes glutamate and aspartate ADP-ribosylation of target proteins; nmnat1 confers glutamate and aspartate specificity. Parp1 initiates the repair of DNA breaks: recognizes and binds DNA breaks within chromatin and recruits hpf1, licensing serine ADP-ribosylation of target proteins, such as histones (H2BS6ADPr and H3S10ADPr), thereby promoting decompaction of chromatin and the recruitment of repair factors leading to the reparation of DNA strand breaks. In addition to base excision repair (BER) pathway, also involved in double-strand breaks (DSBs) repair. Mediates the poly-ADP-ribosylation of a number of proteins. In addition to proteins, also able to ADP-ribosylate DNA: catalyzes ADP-ribosylation of DNA strand break termini containing terminal phosphates and a 2'-OH group in single- and double-stranded DNA, respectively. Parp1-mediated DNA repair in neurons plays a role in sleep: senses DNA damage in neurons and promotes sleep, facilitating efficient DNA repair. In addition to DNA repair, also involved in other processes, such as transcription regulation, programmed cell death, membrane repair, adipogenesis and innate immunity. Acts as a repressor of transcription: binds to nucleosomes and modulates chromatin structure in a manner similar to histone H1, thereby altering RNA polymerase II. Acts both as a positive and negative regulator of transcription elongation, depending on the context. Poly-ADP-ribose chains generated by parp1 also play a role in poly-ADP-ribose-dependent cell death, a process named parthanatos. Also acts as a negative regulator of the cGAS-STING pathway by mediating poly-ADP-ribosylation and inactivation of cgas. Acts as a negative regulator of adipogenesis by catalyzing poly ADP-ribosylation of histone H2B on 'Glu-35' (H2BE35ADPr). In Oncorhynchus masou (Cherry salmon), this protein is Poly [ADP-ribose] polymerase 1 (parp1).